The primary structure comprises 511 residues: Maturase K (511 aa).

This sequence belongs to the intron maturase 2 family. MatK subfamily.

Its subcellular location is the plastid. It localises to the chloroplast. Its function is as follows. Usually encoded in the trnK tRNA gene intron. Probably assists in splicing its own and other chloroplast group II introns. The sequence is that of Maturase K from Primula veris (Cowslip).